The following is a 346-amino-acid chain: Uroporphyrinogen decarboxylase (346 aa).

Substrate contacts are provided by residues 21–25, phenylalanine 40, aspartate 71, tyrosine 146, serine 201, and histidine 316; that span reads RQAGR.

This sequence belongs to the uroporphyrinogen decarboxylase family. As to quaternary structure, homodimer.

The protein localises to the cytoplasm. The catalysed reaction is uroporphyrinogen III + 4 H(+) = coproporphyrinogen III + 4 CO2. It participates in porphyrin-containing compound metabolism; protoporphyrin-IX biosynthesis; coproporphyrinogen-III from 5-aminolevulinate: step 4/4. Catalyzes the decarboxylation of four acetate groups of uroporphyrinogen-III to yield coproporphyrinogen-III. The sequence is that of Uroporphyrinogen decarboxylase from Rickettsia felis (strain ATCC VR-1525 / URRWXCal2) (Rickettsia azadi).